The sequence spans 398 residues: Fatty-acid-binding protein 2 (398 aa).

Positions 222, 235, and 302 each coordinate dodecanoate.

This sequence belongs to the chalcone isomerase family. In terms of tissue distribution, expressed in developing cotyledons, young seedlings, roots, seeds, embryos, macrospores, preanthesis and tapetum. Restricted to developing and reproductive tissues.

It is found in the plastid. The protein localises to the chloroplast stroma. Functionally, fatty-acid-binding protein. Associates with saturated fatty acid. This chain is Fatty-acid-binding protein 2 (FAP2), found in Arabidopsis thaliana (Mouse-ear cress).